An 87-amino-acid chain; its full sequence is Small ribosomal subunit protein bS18 (87 aa).

This sequence belongs to the bacterial ribosomal protein bS18 family. As to quaternary structure, part of the 30S ribosomal subunit. Forms a tight heterodimer with protein bS6.

Binds as a heterodimer with protein bS6 to the central domain of the 16S rRNA, where it helps stabilize the platform of the 30S subunit. The chain is Small ribosomal subunit protein bS18 from Nitratidesulfovibrio vulgaris (strain ATCC 29579 / DSM 644 / CCUG 34227 / NCIMB 8303 / VKM B-1760 / Hildenborough) (Desulfovibrio vulgaris).